A 234-amino-acid polypeptide reads, in one-letter code: Leucyl/phenylalanyl-tRNA--protein transferase (234 aa).

It belongs to the L/F-transferase family.

The protein resides in the cytoplasm. The catalysed reaction is N-terminal L-lysyl-[protein] + L-leucyl-tRNA(Leu) = N-terminal L-leucyl-L-lysyl-[protein] + tRNA(Leu) + H(+). It carries out the reaction N-terminal L-arginyl-[protein] + L-leucyl-tRNA(Leu) = N-terminal L-leucyl-L-arginyl-[protein] + tRNA(Leu) + H(+). It catalyses the reaction L-phenylalanyl-tRNA(Phe) + an N-terminal L-alpha-aminoacyl-[protein] = an N-terminal L-phenylalanyl-L-alpha-aminoacyl-[protein] + tRNA(Phe). Functionally, functions in the N-end rule pathway of protein degradation where it conjugates Leu, Phe and, less efficiently, Met from aminoacyl-tRNAs to the N-termini of proteins containing an N-terminal arginine or lysine. The sequence is that of Leucyl/phenylalanyl-tRNA--protein transferase from Syntrophobacter fumaroxidans (strain DSM 10017 / MPOB).